The primary structure comprises 365 residues: Aminotransferase poxL (365 aa).

Arg-92 provides a ligand contact to pyridoxal 5'-phosphate. Lys-193 carries the N6-(pyridoxal phosphate)lysine modification. Position 229 (Glu-229) interacts with pyridoxal 5'-phosphate.

This sequence belongs to the class-IV pyridoxal-phosphate-dependent aminotransferase family. The cofactor is pyridoxal 5'-phosphate.

The protein operates within secondary metabolite biosynthesis. In terms of biological role, aminotransferase; part of the gene cluster that mediates the biosynthesis of oxaleimides, cytotoxic compounds containing an unusual disubstituted succinimide moiety. The first step of the pathway is provided by the HR-PKS poxF that serves in a new mode of collaborative biosynthesis with the PKS-NRPS poxE, by providing the olefin containing amino acid substrate via the synthesis of an ACP-bound dec-4-enoate. The cytochrome P450 monooxygenase poxM-catalyzed oxidation at the alpha-position creates the enzyme-bound 2-hydroxydec-4-enoyl-ACP thioester, which may be prone to spontaneous hydrolysis to yield 2-hydroxydec-4-enoic acid due to increased electrophilicity of the carbonyl. 2-hydroxydec-4-enoic acid can then be further oxidized by poxM to yield the alpha-ketoacid 2-oxodec-4-enoicacid, which is reductively aminated by the aminotransferase poxL to yield (S,E)-2-aminodec-4-enoic acid. The Hybrid PKS-NRPS synthetase poxE then performs condensation between the octaketide product of its PKS modules and the amino group of (S,E)-2-aminodec-4-enoic acid which is activated and incorporated by the adenylation domain. The resulting aminoacyl product can be cyclized by the Diels-Alderase PoxQ and reductively released by the reductive (R) domain of poxE to yield an aldehyde intermediate. The released aldehyde is then substrate for a Knoevenagel condensation by the hydrolyase poxO followed by an oxidation at the 5-position of the pyrrolidone ring. The presence of the olefin from the amino acid building block allows for migration of the substituted allyl group to occur. This allylic transposition reaction takes place in a conjugate addition, semipinacol-like fashion to yield a succinimide intermediate. Iterative two-electron oxidations of the C7 methyl of the succinimide intermediate to the carboxylic acid can be catalyzed by one of two remaining cytochrome P450 monooxygenasess poxC or poxD to yield oxaleimide A. Subsequent oxidation yields the maleimide scaffold oxaleimide I. Both oxaleimide A and oxaleimide I can undergo oxidative modifications in the decalin ring to yield the series of products oxaleimides B to H. The chain is Aminotransferase poxL from Penicillium oxalicum.